Consider the following 37-residue polypeptide: Potassium channel toxin alpha-KTx 4.3 (37 aa).

3 disulfide bridges follow: Cys-7-Cys-28, Cys-13-Cys-33, and Cys-17-Cys-35. An interaction with Ca(2+)-activated K(+) channels region spans residues 26 to 33; that stretch reads GKCMNGKC.

In terms of tissue distribution, expressed by the venom gland.

The protein resides in the secreted. Functionally, blocks reversibly Shaker B potassium-channels. This chain is Potassium channel toxin alpha-KTx 4.3, found in Tityus discrepans (Venezuelan scorpion).